The following is a 274-amino-acid chain: MQFSKMHGLGNDFMVVDAVTQNVFFSPELIRRLADRHLGVGFDQLLVVEPPYDPELDFHYRIFNTDGSEVAQCGNGARCFARFVRLKGLTNKRDIRVSTANGRMVLTVTDDDLVRVNMGEPNFEPSAVPFRANKVEKTYIMRAAEQTILCGVVSMGNPHCVIQVDDVDTAAVETLGPVLESHERFPERANIGFMQVVKREHIRLRVYERGAGETQACGSGACAAVAVGIQQGLLAEEVRVELPGGRLDIAWKGPGHPLYMTGPAVHVYDGFIHL.

Substrate is bound by residues N11, Q44, and N64. C73 (proton donor) is an active-site residue. Substrate is bound by residues 74–75 (GN), N157, N190, and 208–209 (ER). C217 functions as the Proton acceptor in the catalytic mechanism. 218–219 (GS) contacts substrate.

It belongs to the diaminopimelate epimerase family. In terms of assembly, homodimer.

The protein localises to the cytoplasm. The catalysed reaction is (2S,6S)-2,6-diaminopimelate = meso-2,6-diaminopimelate. The protein operates within amino-acid biosynthesis; L-lysine biosynthesis via DAP pathway; DL-2,6-diaminopimelate from LL-2,6-diaminopimelate: step 1/1. Its function is as follows. Catalyzes the stereoinversion of LL-2,6-diaminopimelate (L,L-DAP) to meso-diaminopimelate (meso-DAP), a precursor of L-lysine and an essential component of the bacterial peptidoglycan. The polypeptide is Diaminopimelate epimerase (Escherichia coli O81 (strain ED1a)).